A 558-amino-acid polypeptide reads, in one-letter code: Formate--tetrahydrofolate ligase (558 aa).

66–73 (TPAGEGKT) serves as a coordination point for ATP.

This sequence belongs to the formate--tetrahydrofolate ligase family.

The enzyme catalyses (6S)-5,6,7,8-tetrahydrofolate + formate + ATP = (6R)-10-formyltetrahydrofolate + ADP + phosphate. It participates in one-carbon metabolism; tetrahydrofolate interconversion. The protein is Formate--tetrahydrofolate ligase of Clostridioides difficile (strain 630) (Peptoclostridium difficile).